Reading from the N-terminus, the 89-residue chain is Large ribosomal subunit protein eL31 (89 aa).

The protein belongs to the eukaryotic ribosomal protein eL31 family.

This Thermoplasma acidophilum (strain ATCC 25905 / DSM 1728 / JCM 9062 / NBRC 15155 / AMRC-C165) protein is Large ribosomal subunit protein eL31 (rpl31e).